The chain runs to 309 residues: Probable manganese-dependent inorganic pyrophosphatase (309 aa).

Mn(2+) is bound by residues His9, Asp13, Asp15, Asp75, His97, and Asp149.

Belongs to the PPase class C family. Requires Mn(2+) as cofactor.

Its subcellular location is the cytoplasm. It catalyses the reaction diphosphate + H2O = 2 phosphate + H(+). In Bacillus cereus (strain ZK / E33L), this protein is Probable manganese-dependent inorganic pyrophosphatase.